The chain runs to 232 residues: Large ribosomal subunit protein uL1 (232 aa).

The protein belongs to the universal ribosomal protein uL1 family. Part of the 50S ribosomal subunit.

In terms of biological role, binds directly to 23S rRNA. The L1 stalk is quite mobile in the ribosome, and is involved in E site tRNA release. Functionally, protein L1 is also a translational repressor protein, it controls the translation of the L11 operon by binding to its mRNA. The polypeptide is Large ribosomal subunit protein uL1 (Bacillus velezensis (strain DSM 23117 / BGSC 10A6 / LMG 26770 / FZB42) (Bacillus amyloliquefaciens subsp. plantarum)).